The chain runs to 459 residues: Methionine aminopeptidase 2-2 (459 aa).

Basic and acidic residues predominate over residues 1–12; sequence MGSKSPEDHRQG. Residues 1 to 87 form a disordered region; the sequence is MGSKSPEDHR…KKLSVVQQTS (87 aa). Over residues 43–54 the composition is skewed to acidic residues; that stretch reads GQDEDGDDDDDE. Basic and acidic residues predominate over residues 55–66; the sequence is KTGIDLKTNDGA. Basic residues predominate over residues 67–79; the sequence is KKKRKRNKKKSKK. His-210 provides a ligand contact to substrate. Residues Asp-231, Asp-242, and His-311 each contribute to the a divalent metal cation site. Residue His-319 coordinates substrate. Positions 344 and 440 each coordinate a divalent metal cation.

It belongs to the peptidase M24A family. Methionine aminopeptidase eukaryotic type 2 subfamily. It depends on Co(2+) as a cofactor. The cofactor is Zn(2+). Mn(2+) is required as a cofactor. Requires Fe(2+) as cofactor.

It localises to the cytoplasm. It catalyses the reaction Release of N-terminal amino acids, preferentially methionine, from peptides and arylamides.. Cotranslationally removes the N-terminal methionine from nascent proteins. The N-terminal methionine is often cleaved when the second residue in the primary sequence is small and uncharged (Met-Ala-, Cys, Gly, Pro, Ser, Thr, or Val). In Pyrenophora teres f. teres (strain 0-1) (Barley net blotch fungus), this protein is Methionine aminopeptidase 2-2.